Consider the following 130-residue polypeptide: Iron-sulfur cluster insertion protein ErpA (130 aa).

Positions 58, 122, and 124 each coordinate iron-sulfur cluster.

It belongs to the HesB/IscA family. As to quaternary structure, homodimer. Iron-sulfur cluster is required as a cofactor.

Functionally, required for insertion of 4Fe-4S clusters for at least IspG. The protein is Iron-sulfur cluster insertion protein ErpA of Stenotrophomonas maltophilia (strain K279a).